Here is a 231-residue protein sequence, read N- to C-terminus: tRNA (guanine-N(1)-)-methyltransferase (231 aa).

G112 lines the S-adenosyl-L-methionine pocket.

It belongs to the RNA methyltransferase TrmD family. Homodimer.

The protein resides in the cytoplasm. The enzyme catalyses guanosine(37) in tRNA + S-adenosyl-L-methionine = N(1)-methylguanosine(37) in tRNA + S-adenosyl-L-homocysteine + H(+). In terms of biological role, specifically methylates guanosine-37 in various tRNAs. The protein is tRNA (guanine-N(1)-)-methyltransferase of Chlorobium chlorochromatii (strain CaD3).